Here is a 117-residue protein sequence, read N- to C-terminus: Large ribosomal subunit protein bL20 (117 aa).

Belongs to the bacterial ribosomal protein bL20 family.

Binds directly to 23S ribosomal RNA and is necessary for the in vitro assembly process of the 50S ribosomal subunit. It is not involved in the protein synthesizing functions of that subunit. The chain is Large ribosomal subunit protein bL20 (rplT) from Rickettsia prowazekii (strain Madrid E).